A 674-amino-acid polypeptide reads, in one-letter code: L-type lectin-domain containing receptor kinase SIT1 (674 aa).

The first 27 residues, 1–27, serve as a signal peptide directing secretion; it reads MRRPELIMRSLPLILFLSLGSFHLAAA. Topologically, residues 28-301 are extracellular; that stretch reads AVDDQFTFDG…IARAPSNVLK (274 aa). The tract at residues 31 to 275 is legume-lectin like; that stretch reads DQFTFDGFAG…VLAWSFKMDG (245 aa). N-linked (GlcNAc...) asparagine glycans are attached at residues N42, N61, N143, N196, N219, N240, and N281. Residues 302 to 322 form a helical membrane-spanning segment; the sequence is ILLPIASAALVSALAIAVLVI. Residues 323 to 674 lie on the Cytoplasmic side of the membrane; sequence HRRRRRYAEL…GNISDIPRAR (352 aa). The Protein kinase domain occupies 357–636; it reads FSDERLLGFG…LDGAMPLPEL (280 aa). Residues 363 to 371 and K386 contribute to the ATP site; that span reads LGFGGFGRV. D482 serves as the catalytic Proton acceptor. A phosphothreonine mark is found at T511, T515, T516, and T521.

It in the C-terminal section; belongs to the protein kinase superfamily. Ser/Thr protein kinase family. In the N-terminal section; belongs to the leguminous lectin family. Interacts with B'KAPPA. Post-translationally, autophosphorylated at Thr-511, Thr-515 or Thr-516, and Thr-521 in response to salt stress. Dephosphorylated by phosphatase 2A in response to salt stress. In terms of tissue distribution, expressed in root epidermal cells.

The protein localises to the cell membrane. It catalyses the reaction L-seryl-[protein] + ATP = O-phospho-L-seryl-[protein] + ADP + H(+). The catalysed reaction is L-threonyl-[protein] + ATP = O-phospho-L-threonyl-[protein] + ADP + H(+). With respect to regulation, activated by autophosphorylation in response to salt stress. Lectin-domain containing receptor kinase involved in salt stress response. Acts as a negative regulator of salt tolerance. Mediates salt sensitivity by phosphorylating and activating MPK3 and MPK6. Promotes ethylene production and mediates salt-induced ethylene signaling. Promotes the accumulation of reactive oxygen species (ROS) under salt stress conditions. Its kinase activity is triggered by salt stress and is required for its function in salt stress response. Phosphorylates B'KAPPA, a B regulatory subunit of phosphatase 2A (PP2A). In Oryza sativa subsp. japonica (Rice), this protein is L-type lectin-domain containing receptor kinase SIT1.